Reading from the N-terminus, the 549-residue chain is Probable protein kinase UbiB (549 aa).

In terms of domain architecture, Protein kinase spans 123-501 (DFEDTPLASA…QQKAHKSNYL (379 aa)). ATP-binding positions include 129–137 (LASASISQV) and K152. The active-site Proton acceptor is the D287. The next 2 helical transmembrane spans lie at 498–518 (SNYLLITSAILVICGTILLNQ) and 520–540 (ATLWASYGSIGTGLILWVLGW).

The protein belongs to the ABC1 family. UbiB subfamily.

It is found in the cell inner membrane. It functions in the pathway cofactor biosynthesis; ubiquinone biosynthesis [regulation]. Its function is as follows. Is probably a protein kinase regulator of UbiI activity which is involved in aerobic coenzyme Q (ubiquinone) biosynthesis. The polypeptide is Probable protein kinase UbiB (Shewanella piezotolerans (strain WP3 / JCM 13877)).